Here is a 426-residue protein sequence, read N- to C-terminus: Serine--tRNA ligase (426 aa).

An L-serine-binding site is contributed by threonine 233–glutamate 235. Arginine 264–glutamate 266 contacts ATP. Glutamate 287 is an L-serine binding site. ATP is bound at residue glutamate 351 to serine 354. An L-serine-binding site is contributed by serine 387.

The protein belongs to the class-II aminoacyl-tRNA synthetase family. Type-1 seryl-tRNA synthetase subfamily. Homodimer. The tRNA molecule binds across the dimer.

The protein resides in the cytoplasm. It carries out the reaction tRNA(Ser) + L-serine + ATP = L-seryl-tRNA(Ser) + AMP + diphosphate + H(+). The enzyme catalyses tRNA(Sec) + L-serine + ATP = L-seryl-tRNA(Sec) + AMP + diphosphate + H(+). The protein operates within aminoacyl-tRNA biosynthesis; selenocysteinyl-tRNA(Sec) biosynthesis; L-seryl-tRNA(Sec) from L-serine and tRNA(Sec): step 1/1. Its function is as follows. Catalyzes the attachment of serine to tRNA(Ser). Is also able to aminoacylate tRNA(Sec) with serine, to form the misacylated tRNA L-seryl-tRNA(Sec), which will be further converted into selenocysteinyl-tRNA(Sec). This is Serine--tRNA ligase from Pseudomonas paraeruginosa (strain DSM 24068 / PA7) (Pseudomonas aeruginosa (strain PA7)).